The following is a 264-amino-acid chain: tRNA (guanine-N(1)-)-methyltransferase (264 aa).

149-154 (IGDYVL) contributes to the S-adenosyl-L-methionine binding site.

Belongs to the RNA methyltransferase TrmD family. As to quaternary structure, homodimer.

It localises to the cytoplasm. It catalyses the reaction guanosine(37) in tRNA + S-adenosyl-L-methionine = N(1)-methylguanosine(37) in tRNA + S-adenosyl-L-homocysteine + H(+). Specifically methylates guanosine-37 in various tRNAs. This is tRNA (guanine-N(1)-)-methyltransferase from Methylobacillus flagellatus (strain ATCC 51484 / DSM 6875 / VKM B-1610 / KT).